The primary structure comprises 484 residues: MAIVGSNSVSKKPKHTKRNDARDLAEKIKRNALKKQEQDKKQQLEEESKPESSQKSKNIVEVNPDDEVKFSTFSELKLVPELLEAIQQMKFSKPTPIQSEAIPHALEGKDIIGLAQTGSGKTAAFAIPILQSLWEAQTPYFGLVLAPARELAYQIKETFDALGSTMGVRTVCLVGGMDMMDQARDLMRKPHIIIATPGRIMDHLEHTKGFSLKMLKYFVMDEADKLLDLEFGPVLDKILKQIPSKRTTYLFSATMTNKIEKLQRASLHNPVRVAVSSKYQTADNLIQSMMLVSDGYKNTYLIHLLNEFVGKSIIIFARTRAHTQRTSILCRILGFSAVPLHGDLTQAQRLGSLNKFKSGTANILIATDVAARGLDIPSVDVVINYDIPTDSKAYVHRVGRTARAGRSGKSISLVTQYDLEMYLRIEQSIQKKLPKDPSPPKAMLDALHVHVDRAYAEAIRQTKEFHEKTRRGRRGKDDKDREEH.

The segment covering 1–10 (MAIVGSNSVS) has biased composition (polar residues). The interval 1-61 (MAIVGSNSVS…SSQKSKNIVE (61 aa)) is disordered. The span at 18–54 (RNDARDLAEKIKRNALKKQEQDKKQQLEEESKPESSQ) shows a compositional bias: basic and acidic residues. The Q motif motif lies at 71–99 (STFSELKLVPELLEAIQQMKFSKPTPIQS). Residues 102–273 (IPHALEGKDI…RASLHNPVRV (172 aa)) enclose the Helicase ATP-binding domain. 115–122 (AQTGSGKT) is a binding site for ATP. The DEAD box motif lies at 221-224 (DEAD). Residues 300–444 (YLIHLLNEFV…KDPSPPKAML (145 aa)) enclose the Helicase C-terminal domain. The disordered stretch occupies residues 460–484 (RQTKEFHEKTRRGRRGKDDKDREEH). A compositionally biased stretch (basic and acidic residues) spans 475–484 (GKDDKDREEH).

This sequence belongs to the DEAD box helicase family. DDX47/RRP3 subfamily. In terms of assembly, interacts with the SSU processome.

It localises to the nucleus. It carries out the reaction ATP + H2O = ADP + phosphate + H(+). ATP-dependent rRNA helicase required for pre-ribosomal RNA processing. Involved in the maturation of the 35S-pre-rRNA and to its cleavage to mature 18S rRNA. The polypeptide is ATP-dependent rRNA helicase RRP3 (Scheffersomyces stipitis (strain ATCC 58785 / CBS 6054 / NBRC 10063 / NRRL Y-11545) (Yeast)).